Consider the following 161-residue polypeptide: Ribosome maturation factor RimP (161 aa).

The protein belongs to the RimP family.

The protein resides in the cytoplasm. In terms of biological role, required for maturation of 30S ribosomal subunits. In Rickettsia typhi (strain ATCC VR-144 / Wilmington), this protein is Ribosome maturation factor RimP.